The sequence spans 532 residues: 56 kDa type-specific antigen (532 aa).

The first 22 residues, 1 to 22, serve as a signal peptide directing secretion; the sequence is MKKIMLIASAMSALSLPFSASA. The chain crosses the membrane as a helical span at residues 67 to 87; it reads TNGLPFGGTLAAGMTIAPGFR. The interval 401 to 428 is disordered; it reads QEEDAKNQGEGDCKQQQGTSEKSKKGKD. Basic and acidic residues predominate over residues 403–413; the sequence is EDAKNQGEGDC. Residues 480 to 500 traverse the membrane as a helical segment; that stretch reads TGMVASGALGVAINAAEGVYV.

Its subcellular location is the cell membrane. Its function is as follows. May be an adherent factor for rickettsial adsorption to the host-cell surface and a determinant of virulence of individual rickettsial strain. It is the major outer membrane protein. This is 56 kDa type-specific antigen from Orientia tsutsugamushi (Rickettsia tsutsugamushi).